Here is an 889-residue protein sequence, read N- to C-terminus: Alanine--tRNA ligase (889 aa).

Positions 574, 578, 676, and 680 each coordinate Zn(2+).

It belongs to the class-II aminoacyl-tRNA synthetase family. Requires Zn(2+) as cofactor.

It is found in the cytoplasm. It catalyses the reaction tRNA(Ala) + L-alanine + ATP = L-alanyl-tRNA(Ala) + AMP + diphosphate. Its function is as follows. Catalyzes the attachment of alanine to tRNA(Ala) in a two-step reaction: alanine is first activated by ATP to form Ala-AMP and then transferred to the acceptor end of tRNA(Ala). Also edits incorrectly charged Ser-tRNA(Ala) and Gly-tRNA(Ala) via its editing domain. This is Alanine--tRNA ligase from Thermobifida fusca (strain YX).